Here is a 105-residue protein sequence, read N- to C-terminus: Nucleoid-associated protein EAT1b_1710 (105 aa).

Low complexity predominate over residues Met1–Lys16. The interval Met1–Glu26 is disordered. Over residues Met17–Glu26 the composition is skewed to basic and acidic residues.

Belongs to the YbaB/EbfC family. Homodimer.

The protein localises to the cytoplasm. It is found in the nucleoid. Binds to DNA and alters its conformation. May be involved in regulation of gene expression, nucleoid organization and DNA protection. The sequence is that of Nucleoid-associated protein EAT1b_1710 from Exiguobacterium sp. (strain ATCC BAA-1283 / AT1b).